A 425-amino-acid chain; its full sequence is Serine hydroxymethyltransferase 2 (425 aa).

Residues leucine 121 and 125–127 contribute to the (6S)-5,6,7,8-tetrahydrofolate site; that span reads GHL. Lysine 230 carries the N6-(pyridoxal phosphate)lysine modification.

The protein belongs to the SHMT family. As to quaternary structure, homodimer. Requires pyridoxal 5'-phosphate as cofactor.

The protein localises to the cytoplasm. The catalysed reaction is (6R)-5,10-methylene-5,6,7,8-tetrahydrofolate + glycine + H2O = (6S)-5,6,7,8-tetrahydrofolate + L-serine. Its pathway is one-carbon metabolism; tetrahydrofolate interconversion. It participates in amino-acid biosynthesis; glycine biosynthesis; glycine from L-serine: step 1/1. In terms of biological role, catalyzes the reversible interconversion of serine and glycine with tetrahydrofolate (THF) serving as the one-carbon carrier. This reaction serves as the major source of one-carbon groups required for the biosynthesis of purines, thymidylate, methionine, and other important biomolecules. Also exhibits THF-independent aldolase activity toward beta-hydroxyamino acids, producing glycine and aldehydes, via a retro-aldol mechanism. In Mycobacterium bovis (strain ATCC BAA-935 / AF2122/97), this protein is Serine hydroxymethyltransferase 2.